A 27-amino-acid polypeptide reads, in one-letter code: Delta-conotoxin SuVIA (27 aa).

Disulfide bonds link C1/C17, C8/C21, and C16/C25.

The protein belongs to the conotoxin O1 superfamily. In terms of tissue distribution, expressed by the venom duct, in the proximal part (indicative of a defensive role).

It is found in the secreted. In terms of biological role, this toxin activates voltage-gated sodium channels (Nav1.3/SCN3A (EC(50)=3.98 nM), Nav1.4/SCN4A (EC(50)=4.99 nM), Nav1.6/SCN8A (EC(50)=1.27 nM) and Nav1.7/SCN9A (EC(50)=2.42 nM)). It shifts the voltage-dependence of activation to more hyperpolarized potentials but has only little effect on channel inactivation. In vivo, it induces nocifensive or pain-like behaviors in mice when injected intraplantarly. This is coherent with the specific defensive role deduced from its proximal position in the venom gland. The polypeptide is Delta-conotoxin SuVIA (Conus suturatus (Sutured cone)).